A 547-amino-acid polypeptide reads, in one-letter code: NXPE family member 1 (547 aa).

The N-terminal stretch at 1–21 (MSSNTMLQKTLLILISFSVVT) is a signal peptide. Residues N39 and N211 are each glycosylated (N-linked (GlcNAc...) asparagine).

It belongs to the NXPE family.

The protein resides in the secreted. This is NXPE family member 1 (NXPE1) from Homo sapiens (Human).